Consider the following 904-residue polypeptide: Serine/arginine repetitive matrix protein 1 (904 aa).

M1 bears the N-acetylmethionine mark. The tract at residues 1–151 is necessary for DNA and RNA-binding; it reads MDAGFFRGTS…ASMKKQDEDK (151 aa). Residues 1–156 are necessary for mRNA 3'-end cleavage and cytoplasmic accumulation; it reads MDAGFFRGTS…QDEDKDKRDK (156 aa). R7 is subject to Citrulline. A PWI domain is found at 27-126; the sequence is QLKFAECLEK…AGIPSAFLEL (100 aa). K127 is covalently cross-linked (Glycyl lysine isopeptide (Lys-Gly) (interchain with G-Cter in SUMO2)). Residues 139-170 are compositionally biased toward basic and acidic residues; it reads EKLASMKKQDEDKDKRDKEEKESSREKRERSR. The interval 139–904 is disordered; the sequence is EKLASMKKQD…MRKAQVSPQS (766 aa). K140 carries the post-translational modification N6-acetyllysine. Over residues 171 to 207 the composition is skewed to basic residues; the sequence is SPRRRKSRSPSPRRRSSPVRRERKRSHSRSPRHRTKS. Residues 214–234 show a composition bias toward basic and acidic residues; it reads PEKKEKTPELPEPSVKVKEPS. A Phosphothreonine modification is found at T220. Phosphoserine is present on S227. A Glycyl lysine isopeptide (Lys-Gly) (interchain with G-Cter in SUMO1); alternate cross-link involves residue K231. K231 is covalently cross-linked (Glycyl lysine isopeptide (Lys-Gly) (interchain with G-Cter in SUMO2); alternate). Phosphoserine occurs at positions 234 and 240. The residue at position 241 (T241) is a Phosphothreonine. Over residues 246-275 the composition is skewed to basic and acidic residues; sequence KVPKPEPIPEPKEPSPEKNSKKEKEKEKTR. Residue K249 forms a Glycyl lysine isopeptide (Lys-Gly) (interchain with G-Cter in SUMO2) linkage. The residue at position 260 (S260) is a Phosphoserine. Composition is skewed to basic residues over residues 276-329 and 336-351; these read PRSR…RTPP and PRHR…RRRS. Residues 300–688 form a necessary for speckles and matrix localization region; the sequence is RRHRSRSRSY…NKRHSPSPRP (389 aa). Residues 352–368 are compositionally biased toward low complexity; the sequence is SASLSGSSSSSSSSRSR. 4 positions are modified to phosphoserine: S389, S391, S393, and S402. T406 bears the Phosphothreonine mark. S414 carries the post-translational modification Phosphoserine. T416 carries the phosphothreonine modification. Phosphoserine is present on residues S420, S429, S431, and S436. Polar residues predominate over residues 428-438; sequence VSVSPGRTSGK. K447 is covalently cross-linked (Glycyl lysine isopeptide (Lys-Gly) (interchain with G-Cter in SUMO2)). 2 positions are modified to phosphoserine: S450 and S452. K459 participates in a covalent cross-link: Glycyl lysine isopeptide (Lys-Gly) (interchain with G-Cter in SUMO2). Phosphoserine is present on residues S463 and S465. K472 is covalently cross-linked (Glycyl lysine isopeptide (Lys-Gly) (interchain with G-Cter in SUMO2)). S478 bears the Phosphoserine mark. Residues 478 to 501 are compositionally biased toward low complexity; that stretch reads SVQQRRQYRRQNQQSSSDSGSSSS. Residues 503-518 show a composition bias toward basic and acidic residues; that stretch reads EDERPKRSHVKNGEVG. Residues S524, S526, S528, S530, S532, S549, and S551 each carry the phosphoserine modification. A compositionally biased stretch (basic residues) spans 533 to 560; the sequence is PRKRQKETSPRGRRRRSPSPPPTRRRRS. At T555 the chain carries Phosphothreonine. S560 and S562 each carry phosphoserine. A compositionally biased stretch (basic residues) spans 567 to 592; that stretch reads PRRRRTPTPPPRRRTPSPPPRRRSPS. A phosphothreonine mark is found at T572, T574, and T581. S583 carries the post-translational modification Phosphoserine. The span at 593-605 shows a compositional bias: low complexity; sequence PRRYSPPIQRRYS. Position 596 is a phosphotyrosine (Y596). Phosphoserine occurs at positions 597, 605, and 607. T614 bears the Phosphothreonine mark. A phosphoserine mark is found at S616, S626, S628, S636, and S638. Residues 621–636 show a composition bias toward basic residues; that stretch reads PKRRASPSPPPKRRVS. The segment covering 649–663 has biased composition (basic residues); sequence TKRRSPSLSSKHRKG. 7 positions are modified to phosphoserine: S694, S695, S696, S705, S707, S713, and S715. Composition is skewed to low complexity over residues 701 to 719 and 736 to 759; these read RRGA…PSTR and AASP…SPEP. Phosphothreonine is present on T718. 10 positions are modified to phosphoserine: S738, S740, S748, S752, S754, S756, S769, S773, S775, and S777. A compositionally biased stretch (low complexity) spans 771 to 786; sequence VQSQSPSTNWSPAVPV. T778 bears the Phosphothreonine mark. A phosphoserine mark is found at S781 and S791. At T793 the chain carries Phosphothreonine. 3 positions are modified to phosphoserine: S795, S797, and S802. Residues 809–834 are compositionally biased toward basic residues; sequence KKKKKKKDKKHKKDKKHKKHKKHKKE. The segment covering 837–866 has biased composition (low complexity); that stretch reads VAAAAAAAVTPAAIAAATTTLAQEEPVAAP. K869 is covalently cross-linked (Glycyl lysine isopeptide (Lys-Gly) (interchain with G-Cter in SUMO2)). A Phosphothreonine modification is found at T872. Residue S874 is modified to Phosphoserine. Residues 882-892 are compositionally biased toward basic and acidic residues; it reads DLEKHLREKAL. S901 carries the post-translational modification Phosphoserine.

Belongs to the splicing factor SR family. In terms of assembly, identified in the spliceosome C complex. Found in a pre-mRNA splicing complex with SFRS4, SFRS5, SNRP70, SNRPA1, SRRM1 and SRRM2. Found in a pre-mRNA exonic splicing enhancer (ESE) complex with SNRP70, SNRPA1, SRRM1 and TRA2B/SFRS10. Component of the minor spliceosome, which splices U12-type introns. Found in a mRNA splicing-dependent exon junction complex (EJC) with DEK, PRPF8, NCBP1, RBM8A, RNPS1, SRRM1 and ALYREF/THOC4. Interacts with DDX39B, CPSF1, RBM8A, RNPS1, and ALYREF/THOC4. Seems to be a compound of RNA export complexes that are released from speckles in a ATP-dependent manner. Post-translationally, phosphorylated on multiple serine and threonine residues by DYRK3 during the G2-to-M transition, after the nuclear-envelope breakdown. Phosphorylation by DYRK3 promotes disassembly of nuclear speckles. In terms of processing, citrullinated by PADI4.

The protein resides in the nucleus matrix. Its subcellular location is the nucleus speckle. Its function is as follows. Part of pre- and post-splicing multiprotein mRNP complexes. As a component of the minor spliceosome, involved in the splicing of U12-type introns in pre-mRNAs. Involved in numerous pre-mRNA processing events. Promotes constitutive and exonic splicing enhancer (ESE)-dependent splicing activation by bridging together sequence-specific (SR family proteins, SFRS4, SFRS5 and TRA2B/SFRS10) and basal snRNP (SNRP70 and SNRPA1) factors of the spliceosome. Stimulates mRNA 3'-end cleavage independently of the formation of an exon junction complex. Binds both pre-mRNA and spliced mRNA 20-25 nt upstream of exon-exon junctions. Binds RNA and DNA with low sequence specificity and has similar preference for either double- or single-stranded nucleic acid substrates. The polypeptide is Serine/arginine repetitive matrix protein 1 (SRRM1) (Homo sapiens (Human)).